The primary structure comprises 1202 residues: Protein jagged-2 (1202 aa).

Topologically, residues 1-1037 (GACCDGDGRT…ETVVMGGSST (1037 aa)) are extracellular. The N-linked (GlcNAc...) asparagine glycan is linked to Asn107. In terms of domain architecture, DSL spans 150–194 (VRCDENYYSATCNKFCRPRNDFFGHYTCDQYGNKACMDGWMGKEC). Intrachain disulfides connect Cys152-Cys161, Cys165-Cys177, Cys185-Cys194, Cys199-Cys210, Cys203-Cys216, Cys218-Cys227, Cys230-Cys241, Cys236-Cys247, Cys249-Cys258, Cys265-Cys277, Cys271-Cys287, Cys289-Cys298, Cys305-Cys316, Cys310-Cys325, Cys327-Cys336, Cys343-Cys354, Cys348-Cys363, Cys365-Cys374, Cys381-Cys392, Cys386-Cys401, Cys403-Cys412, Cys419-Cys429, Cys423-Cys438, Cys440-Cys449, Cys456-Cys467, Cys461-Cys476, Cys478-Cys487, Cys495-Cys506, Cys500-Cys515, Cys517-Cys526, Cys544-Cys567, Cys561-Cys577, Cys579-Cys588, Cys595-Cys606, Cys600-Cys615, Cys617-Cys626, Cys633-Cys644, Cys638-Cys653, Cys655-Cys664, Cys671-Cys682, Cys676-Cys691, and Cys693-Cys702. Positions 195-228 (KEAVCKQGCNLLHGGCTVPGECRCSYGWQGKFCD) constitute an EGF-like 1 domain. An EGF-like 2; atypical domain is found at 229-259 (ECVPYPGCVHGSCVEPWHCDCETNWGGLLCD). 2 EGF-like domains span residues 261 to 299 (DLNY…KNCE) and 301 to 337 (AEHA…PTCA). In terms of domain architecture, EGF-like 5; calcium-binding spans 339–375 (DIDECASNPCAAGGTCVDQVDGFECICPEQWVGATCQ). One can recognise an EGF-like 6; calcium-binding domain in the interval 377–413 (DANECEGKPCLNAFSCKNLIGGYYCDCLPGWKGANCH). The EGF-like 7; calcium-binding domain occupies 415–450 (NINDCHGQCQHGGTCKDLVNGYQCVCPRGFGGRHCE). EGF-like domains lie at 452 to 488 (EYYK…PLCE) and 490 to 527 (DVDL…KNCS). Residue Asn525 is glycosylated (N-linked (GlcNAc...) asparagine). The 61-residue stretch at 529–589 (PRETCPGGAC…DSGFTGTYCH (61 aa)) folds into the EGF-like 10; atypical domain. N-linked (GlcNAc...) asparagine glycosylation is present at Asn574. An EGF-like 11; calcium-binding domain is found at 591-627 (NIDDCMGQPCRNGGTCIDEVDSFACFCPSGWEGELCD). An EGF-like 12; calcium-binding domain is found at 629–665 (NPNDCLPDPCHSRGRCYDLVNDFYCVCDDGWKDKTCH). EGF-like domains follow at residues 667 to 703 (REFQ…STCT) and 706 to 742 (KNSS…RTCT). Asn707 is a glycosylation site (N-linked (GlcNAc...) asparagine). Intrachain disulfides connect Cys710-Cys721, Cys715-Cys730, Cys732-Cys741, Cys748-Cys759, Cys753-Cys768, Cys770-Cys779, Cys786-Cys797, Cys791-Cys806, and Cys808-Cys817. The EGF-like 15; calcium-binding domain occupies 744 to 780 (NTNDCNPLPCYNGGICVDGVNWFRCECAPGFAGPDCR). The EGF-like 16; calcium-binding domain occupies 782–818 (NIDECQSSPCAYGATCVDEINGYRCSCPPGRSGPRCQ). Asn1015 carries N-linked (GlcNAc...) asparagine glycosylation. Residues 1038–1058 (GLLVPVLCSVFSVLWLACMVI) form a helical membrane-spanning segment. The Cytoplasmic segment spans residues 1059 to 1202 (CVWWTRKRRK…TKDVRCAGRE (144 aa)). Composition is skewed to basic and acidic residues over residues 1070–1080 (RERSRLPRDES), 1147–1159 (LSRG…RSRE), and 1185–1202 (VDNR…AGRE). The interval 1070-1202 (RERSRLPRDE…TKDVRCAGRE (133 aa)) is disordered. Ser1080 carries the post-translational modification Phosphoserine.

Its subcellular location is the membrane. Functionally, putative Notch ligand involved in the mediation of Notch signaling. May have a role in neurogenesis in the peripheral nervous system, limb development and in the adult brain. This chain is Protein jagged-2 (Jag2), found in Rattus norvegicus (Rat).